The following is a 263-amino-acid chain: N-acyl homoserine lactonase AttM (263 aa).

7 residues coordinate Zn(2+): H103, H105, D107, H108, H180, D202, and H247.

Belongs to the metallo-beta-lactamase superfamily. The cofactor is Zn(2+).

It catalyses the reaction an N-acyl-L-homoserine lactone + H2O = an N-acyl-L-homoserine + H(+). This is N-acyl homoserine lactonase AttM from Azorhizobium caulinodans (strain ATCC 43989 / DSM 5975 / JCM 20966 / LMG 6465 / NBRC 14845 / NCIMB 13405 / ORS 571).